The primary structure comprises 403 residues: Phosphopentomutase (403 aa).

Positions 13, 298, 303, 339, 340, and 351 each coordinate Mn(2+).

It belongs to the phosphopentomutase family. It depends on Mn(2+) as a cofactor.

The protein resides in the cytoplasm. It carries out the reaction 2-deoxy-alpha-D-ribose 1-phosphate = 2-deoxy-D-ribose 5-phosphate. The catalysed reaction is alpha-D-ribose 1-phosphate = D-ribose 5-phosphate. It functions in the pathway carbohydrate degradation; 2-deoxy-D-ribose 1-phosphate degradation; D-glyceraldehyde 3-phosphate and acetaldehyde from 2-deoxy-alpha-D-ribose 1-phosphate: step 1/2. Functionally, isomerase that catalyzes the conversion of deoxy-ribose 1-phosphate (dRib-1-P) and ribose 1-phosphate (Rib-1-P) to deoxy-ribose 5-phosphate (dRib-5-P) and ribose 5-phosphate (Rib-5-P), respectively. In Streptococcus pyogenes serotype M5 (strain Manfredo), this protein is Phosphopentomutase.